A 332-amino-acid polypeptide reads, in one-letter code: 2,3-diketo-L-gulonate reductase (332 aa).

Histidine 44 functions as the Proton donor in the catalytic mechanism. NAD(+)-binding positions include 168-174 (ITMVDMS), 224-225 (WK), and 304-306 (GHE).

Belongs to the LDH2/MDH2 oxidoreductase family. DlgD subfamily. In terms of assembly, homodimer.

Its subcellular location is the cytoplasm. It catalyses the reaction 3-dehydro-L-gulonate + NAD(+) = 2,3-dioxo-L-gulonate + NADH + H(+). It carries out the reaction 3-dehydro-L-gulonate + NADP(+) = 2,3-dioxo-L-gulonate + NADPH + H(+). Its function is as follows. Catalyzes the reduction of 2,3-diketo-L-gulonate in the presence of NADH, to form 3-keto-L-gulonate. The protein is 2,3-diketo-L-gulonate reductase of Escherichia coli O6:K15:H31 (strain 536 / UPEC).